The chain runs to 232 residues: Cytidylate kinase (232 aa).

15–23 provides a ligand contact to ATP; it reads GPAGAGKST. The tract at residues 164–192 is disordered; it reads KEDPPPISQGQLAAEMKERDMRDSTRADA. Over residues 178–189 the composition is skewed to basic and acidic residues; it reads EMKERDMRDSTR.

The protein belongs to the cytidylate kinase family. Type 1 subfamily.

The protein localises to the cytoplasm. It catalyses the reaction CMP + ATP = CDP + ADP. The enzyme catalyses dCMP + ATP = dCDP + ADP. This chain is Cytidylate kinase, found in Solibacter usitatus (strain Ellin6076).